Reading from the N-terminus, the 489-residue chain is MTFRNCVAVDLGASSGRVMLARYERECRSLTLREIHRFNNGLHSQNGYVTWNVDSLESAIRLGLNKVCEEGIRIDSIGIDTWGVDFVLLDQQGQRVGLPVAYRDSRSNGLMAQAQQQLGKRDIYQRSGIQFLPFNTLYQLRALTEQQPELIPHIAHALLMPDYFSYRLTGKMNWEYTNATTTQLVNINSDDWDESLLAWSGANKAWFGRPTHPGNVIGHWICPQGNEIPVVAVASHDTASAVIASPLNGSRAAYLSSGTWSLMGFESQTPFTNDTALAANITNEGGAEGRYRVLKNIMGLWLLQRVLQERQINDLPALIAATQALPACRFIINPNDDRFINPEAMCSEIQAACREMAQPLPESDAELARCIFDSLALLYADVLHELAQLRGEDFSQLHIVGGGCQNTLLNQLCADACGIRVIAGPVEASTLGNIGIQLMTLDELNNVDDFRQVVSTTANLTTFTPNPDSEIAHYVAQLHSTRQTKELCA.

Ala13 to Arg17 contributes to the ATP binding site. Residues Cys68 and Cys222 are joined by a disulfide bond. Residues Gly83 and His236–Thr238 contribute to the substrate site. Asp237 acts as the Proton acceptor in catalysis. Thr259 is a binding site for ATP. Asn296 lines the substrate pocket. Gln304 lines the ATP pocket. The cysteines at positions 353 and 370 are disulfide-linked. ATP is bound at residue Gly402. The cysteines at positions 413 and 417 are disulfide-linked.

It belongs to the rhamnulokinase family. Mg(2+) is required as a cofactor.

It catalyses the reaction L-rhamnulose + ATP = L-rhamnulose 1-phosphate + ADP + H(+). It functions in the pathway carbohydrate degradation; L-rhamnose degradation; glycerone phosphate from L-rhamnose: step 2/3. Its function is as follows. Involved in the catabolism of L-rhamnose (6-deoxy-L-mannose). Catalyzes the transfer of the gamma-phosphate group from ATP to the 1-hydroxyl group of L-rhamnulose to yield L-rhamnulose 1-phosphate. This Shigella sonnei (strain Ss046) protein is Rhamnulokinase.